Here is a 657-residue protein sequence, read N- to C-terminus: Transcription factor 12 (657 aa).

Residues 1–20 show a composition bias toward polar residues; that stretch reads MDEKGGTTSWGTSGQPSPSY. 5 disordered regions span residues 1–76, 89–285, 297–340, 459–555, and 628–657; these read MDEK…SGLS, LGSP…QTGD, PDHT…YENS, VSAQ…ERRM, and KVSA…MGHM. The span at 30–43 shows a compositional bias: basic and acidic residues; it reads HYSDHLNDSRKGTH. Composition is skewed to polar residues over residues 49-70 and 93-112; these read TPFS…SLYS and AQLS…SATS. The interval 68-89 is leucine-zipper; that stretch reads LYSRDSGLSGCQSSLLRQELGL. A Nuclear localization signal motif is present at residues 130–136; the sequence is KKVRKVP. Polar residues-rich tracts occupy residues 168-193, 202-216, and 230-254; these read MFAS…NGMS, GTST…SYGS, and VSPT…SSSP. Residues 300–311 show a composition bias toward low complexity; sequence TSSSFPSNPSTP. Residues 312 to 340 are compositionally biased toward polar residues; it reads VGSPSPLTGASQWSRSGGQAPSSPNYENS. 3 stretches are compositionally biased toward basic and acidic residues: residues 493 to 505, 511 to 526, and 543 to 555; these read IKSE…ENIH, DDMK…DIKV, and PEQK…ERRM. Positions 552–605 constitute a bHLH domain; that stretch reads ERRMANNARERLRVRDINEAFKELGRMCQLHLKSEKPQTKLLILHQAVAVILSL. The class A specific domain stretch occupies residues 607-630; sequence QQVRERNLNPKAACLKRREEEKVS. Residues 648–657 are compositionally biased toward polar residues; the sequence is SETTNPMGHM.

In terms of assembly, efficient DNA binding requires dimerization with another bHLH protein. Forms homo- or heterooligomers with myogenin, E12 and ITF2 proteins.

It is found in the nucleus. In terms of biological role, transcriptional regulator. Involved in the initiation of neuronal differentiation. Activates transcription by binding to the E box-containing promoter. This Gallus gallus (Chicken) protein is Transcription factor 12 (TCF12).